Consider the following 608-residue polypeptide: MDDQNKNLLLATALSFLVILGWYFFFPPPEEAPQPATEVTETAPQGDTTAPAAAPSAGAATAEVDAAAAETEITEDVPRLTIDTPRVEGSISLKGGRIDDLRLKDYRETLDDDSPIVTLLSPAGQPHAYYALYGWAPGAGLGIEDVPTANTLWQAEAGATLTPDTPVTLTWDNGKGLTFSREVSIDEDYMFSITQSVTNSSGASVALAPYGTLARHGEPANLENFFVLHEGVVGMADGELSEIDYDDMTDFDPDPRDGSRAQVNTVTENGWIGFTGHYWMSTLIPAPGEAFRAIAKYDERRDIYQTDVVLPTVTLAAGESTSANTQLFAGAKEWATIREYERAGIEGFLDSIDWGWFFFFTKPIFAVLHWLNAAIGNMGVAIIALTFLLKILVFPLAYKSYASMARMKELQPEMEKLRERAGDDRQKMQKEMMELYKREKVNPAAGCLPILIQIPIFFSLYKVIFVTLELRHAAFFGPFQDLSVPDPTSLFNLFGLLPWAAPAPDSLLSLVFIGILPILLGVSMWVQQKLNPAPTDETQRMIFAWMPWVFMFMLGGFASGLVVYWITNNVITFTQQYLIMRSHGYTPDVFGNIKSGFKKDKAEKAEKK.

Residues 8-28 (LLLATALSFLVILGWYFFFPP) form a helical membrane-spanning segment. The segment at 33–61 (PQPATEVTETAPQGDTTAPAAAPSAGAAT) is disordered. 5 helical membrane passes run 378–398 (MGVA…PLAY), 448–468 (LPIL…FVTL), 482–502 (LSVP…WAAP), 506–526 (SLLS…SMWV), and 542–562 (IFAW…SGLV).

The protein belongs to the OXA1/ALB3/YidC family. Type 1 subfamily. In terms of assembly, interacts with the Sec translocase complex via SecD. Specifically interacts with transmembrane segments of nascent integral membrane proteins during membrane integration.

Its subcellular location is the cell inner membrane. Required for the insertion and/or proper folding and/or complex formation of integral membrane proteins into the membrane. Involved in integration of membrane proteins that insert both dependently and independently of the Sec translocase complex, as well as at least some lipoproteins. Aids folding of multispanning membrane proteins. The sequence is that of Membrane protein insertase YidC from Ruegeria sp. (strain TM1040) (Silicibacter sp.).